The chain runs to 294 residues: NAD kinase (294 aa).

D74 serves as the catalytic Proton acceptor. NAD(+) contacts are provided by residues 74 to 75 (DG), 148 to 149 (NE), H159, R176, D178, 189 to 194 (TAYSLS), and Q249.

Belongs to the NAD kinase family. A divalent metal cation is required as a cofactor.

The protein localises to the cytoplasm. It catalyses the reaction NAD(+) + ATP = ADP + NADP(+) + H(+). Its function is as follows. Involved in the regulation of the intracellular balance of NAD and NADP, and is a key enzyme in the biosynthesis of NADP. Catalyzes specifically the phosphorylation on 2'-hydroxyl of the adenosine moiety of NAD to yield NADP. The protein is NAD kinase of Vibrio parahaemolyticus serotype O3:K6 (strain RIMD 2210633).